We begin with the raw amino-acid sequence, 919 residues long: Beta-galactosidase 15 (919 aa).

An N-terminal signal peptide occupies residues 1–31 (MAASRGPPLLGFRALALALLLAILLLLGCSA). N63 carries an N-linked (GlcNAc...) asparagine glycan. E220 acts as the Proton donor in catalysis. The active-site Nucleophile is the E289. N-linked (GlcNAc...) asparagine glycans are attached at residues N412, N530, N546, and N855. Positions 822–907 (NAATPELRLQ…KDLAVEAKCS (86 aa)) constitute an SUEL-type lectin domain.

Belongs to the glycosyl hydrolase 35 family.

Its subcellular location is the secreted. It localises to the extracellular space. It is found in the apoplast. The catalysed reaction is Hydrolysis of terminal non-reducing beta-D-galactose residues in beta-D-galactosides.. The sequence is that of Beta-galactosidase 15 from Oryza sativa subsp. japonica (Rice).